Consider the following 148-residue polypeptide: Large ribosomal subunit protein uL11 (148 aa).

The tract at residues 89–108 is disordered; sequence EKKKGSGAHKPGKEKVGQVT.

The protein belongs to the universal ribosomal protein uL11 family. Part of the ribosomal stalk of the 50S ribosomal subunit. Interacts with L10 and the large rRNA to form the base of the stalk. L10 forms an elongated spine to which L12 dimers bind in a sequential fashion forming a multimeric L10(L12)X complex. In terms of processing, one or more lysine residues are methylated.

Forms part of the ribosomal stalk which helps the ribosome interact with GTP-bound translation factors. The chain is Large ribosomal subunit protein uL11 from Anaeromyxobacter dehalogenans (strain 2CP-1 / ATCC BAA-258).